Reading from the N-terminus, the 263-residue chain is L-erythrulose-1-phosphate isomerase (263 aa).

The active-site Electrophile is the histidine 106. The active-site Proton acceptor is glutamate 178.

Belongs to the triosephosphate isomerase family.

It carries out the reaction L-erythrulose 1-phosphate = D-erythrulose 4-phosphate. Its pathway is carbohydrate metabolism; L-threitol degradation. Its function is as follows. Catalyzes the isomerization of L-erythrulose-1P to D-erythrulose-4P. Involved in the degradation pathway of L-threitol, that allows M.smegmatis to grow on this compound as the sole carbon source. The polypeptide is L-erythrulose-1-phosphate isomerase (Mycolicibacterium smegmatis (strain ATCC 700084 / mc(2)155) (Mycobacterium smegmatis)).